The primary structure comprises 271 residues: 3-methyl-2-oxobutanoate hydroxymethyltransferase (271 aa).

Residues D53 and D92 each contribute to the Mg(2+) site. Residues 53 to 54, D92, and K120 contribute to the 3-methyl-2-oxobutanoate site; that span reads DS. E122 is a binding site for Mg(2+). The active-site Proton acceptor is the E189.

This sequence belongs to the PanB family. As to quaternary structure, homodecamer; pentamer of dimers. Requires Mg(2+) as cofactor.

The protein resides in the cytoplasm. The enzyme catalyses 3-methyl-2-oxobutanoate + (6R)-5,10-methylene-5,6,7,8-tetrahydrofolate + H2O = 2-dehydropantoate + (6S)-5,6,7,8-tetrahydrofolate. Its pathway is cofactor biosynthesis; (R)-pantothenate biosynthesis; (R)-pantoate from 3-methyl-2-oxobutanoate: step 1/2. Functionally, catalyzes the reversible reaction in which hydroxymethyl group from 5,10-methylenetetrahydrofolate is transferred onto alpha-ketoisovalerate to form ketopantoate. This is 3-methyl-2-oxobutanoate hydroxymethyltransferase from Paraburkholderia xenovorans (strain LB400).